The primary structure comprises 321 residues: Olfactory receptor 3A3 (321 aa).

Residues 1-34 (MSLQKLMEPEAGTNRTAVAEFILLGLVQTEEMQP) are Extracellular-facing. Residue N14 is glycosylated (N-linked (GlcNAc...) asparagine). A helical membrane pass occupies residues 35 to 58 (VVFVLLLFAYLVTTGGNLSILAAV). The Cytoplasmic portion of the chain corresponds to 59–66 (LVEPKLHA). The chain crosses the membrane as a helical span at residues 67–88 (PMYFFLGNLSVLDVGCITVTVP). The Extracellular portion of the chain corresponds to 89–109 (AMLGRLLSHKSTISYDACLSQ). A disulfide bridge connects residues C106 and C198. Residues 110–129 (LFFFHLLAGMDCFLLTAMAY) form a helical membrane-spanning segment. Residues 130-149 (DRLLAICQPLTYSTRMSQTV) are Cytoplasmic-facing. Residues 150–167 (QRMLVAASWACAFTNALT) traverse the membrane as a helical segment. The Extracellular portion of the chain corresponds to 168-205 (HTVAMSTLNFCGPNEVNHFYCDLPQLFQLSCSSTQLNE). A helical transmembrane segment spans residues 206 to 228 (LLLFVAAAFMAVAPLVFISVSYA). Topologically, residues 229–245 (HVVAAVLQIRSAEGRKK) are cytoplasmic. Residues 246–268 (AFSTCGSHLTVVGIFYGTGVFSY) form a helical membrane-spanning segment. Topologically, residues 269-281 (MRLGSVESSDKDK) are extracellular. A helical membrane pass occupies residues 282 to 301 (GVGVFMTVINPMLNPLIYSL). At 302 to 321 (RNTDVQGALCQLLVGKRSLT) the chain is on the cytoplasmic side.

Belongs to the G-protein coupled receptor 1 family.

It is found in the cell membrane. In terms of biological role, odorant receptor. In Homo sapiens (Human), this protein is Olfactory receptor 3A3 (OR3A3).